The chain runs to 689 residues: Glycine--tRNA ligase beta subunit (689 aa).

Belongs to the class-II aminoacyl-tRNA synthetase family. In terms of assembly, tetramer of two alpha and two beta subunits.

It is found in the cytoplasm. It catalyses the reaction tRNA(Gly) + glycine + ATP = glycyl-tRNA(Gly) + AMP + diphosphate. The chain is Glycine--tRNA ligase beta subunit from Oenococcus oeni (strain ATCC BAA-331 / PSU-1).